Reading from the N-terminus, the 369-residue chain is Dual specificity protein phosphatase 1-A (369 aa).

One can recognise a Rhodanese domain in the interval 21 to 138; it reads RAHKCLILDC…FSAQCPEFCT (118 aa). Residue threonine 168 is modified to Phosphothreonine; by MAPK1. The Tyrosine-protein phosphatase domain maps to 175–316; sequence GPVEILPFLY…LLQFESQVLA (142 aa). Cysteine 260 (phosphocysteine intermediate) is an active-site residue.

It belongs to the protein-tyrosine phosphatase family. Non-receptor class dual specificity subfamily. In terms of processing, phosphorylated by MAPK1/ERK2 at Thr-168 and at one or more serine residues in a progesterone-dependent manner. Phosphorylation reduces its rate of degradation but does not seem to affect phosphatase activity. Expressed in XIK-2 kidney cells.

It localises to the nucleus. The catalysed reaction is O-phospho-L-seryl-[protein] + H2O = L-seryl-[protein] + phosphate. It carries out the reaction O-phospho-L-threonyl-[protein] + H2O = L-threonyl-[protein] + phosphate. It catalyses the reaction O-phospho-L-tyrosyl-[protein] + H2O = L-tyrosyl-[protein] + phosphate. In terms of biological role, dual specificity phosphatase that dephosphorylates MAP kinase MAPK1/ERK2 on both 'Thr-188' and 'Tyr-190', regulating its activity during the meiotic cell cycle. The chain is Dual specificity protein phosphatase 1-A from Xenopus laevis (African clawed frog).